Consider the following 215-residue polypeptide: Cytidylate kinase (215 aa).

Residue 10 to 18 (GPAASGKGT) participates in ATP binding.

It belongs to the cytidylate kinase family. Type 1 subfamily.

The protein resides in the cytoplasm. The enzyme catalyses CMP + ATP = CDP + ADP. It catalyses the reaction dCMP + ATP = dCDP + ADP. This chain is Cytidylate kinase, found in Bartonella tribocorum (strain CIP 105476 / IBS 506).